The following is a 554-amino-acid chain: Glucose-6-phosphate isomerase (554 aa).

Residue Glu-359 is the Proton donor of the active site. Catalysis depends on residues His-390 and Lys-518.

Belongs to the GPI family.

It is found in the cytoplasm. The catalysed reaction is alpha-D-glucose 6-phosphate = beta-D-fructose 6-phosphate. It functions in the pathway carbohydrate biosynthesis; gluconeogenesis. Its pathway is carbohydrate degradation; glycolysis; D-glyceraldehyde 3-phosphate and glycerone phosphate from D-glucose: step 2/4. Catalyzes the reversible isomerization of glucose-6-phosphate to fructose-6-phosphate. This chain is Glucose-6-phosphate isomerase, found in Pseudomonas aeruginosa (strain LESB58).